We begin with the raw amino-acid sequence, 253 residues long: Zinc finger protein GIS (253 aa).

Acidic residues predominate over residues Met1–Thr10. The interval Met1–Ile85 is disordered. Polar residues-rich tracts occupy residues Gln11–Gln21, Ser49–Thr63, and Gly76–Ile85. The C2H2-type zinc finger occupies Phe91–His113.

Expressed in inflorescence meristems, floral meristems and stem epidermis.

It localises to the nucleus. Its function is as follows. Probable transcription factor required for the initiation of inflorescence trichomes in response to gibberellin (GA). Mediates the induction of GL1 expression by GA in inflorescence organs and is antagonized in its action by the DELLA repressor GAI. Acts upstream of the trichome initiation regulators GL1 and GL3, and downstream of the GA signaling repressor SPINDLY (SPY). Does not play a significant role in the cytokinin response. Controls trichome branching through GA signaling. Acts downstream of the key regulator STICHEL (STI) in an endoreduplication-independent pathway. Controls trichome cell division indirectly by acting downstream of a key endoreduplication regulator SIAMESE (SIM). This Arabidopsis thaliana (Mouse-ear cress) protein is Zinc finger protein GIS (GIS).